The chain runs to 127 residues: Large ribosomal subunit protein uL18 (127 aa).

It belongs to the universal ribosomal protein uL18 family. As to quaternary structure, part of the 50S ribosomal subunit; part of the 5S rRNA/L5/L18/L25 subcomplex. Contacts the 5S and 23S rRNAs.

In terms of biological role, this is one of the proteins that bind and probably mediate the attachment of the 5S RNA into the large ribosomal subunit, where it forms part of the central protuberance. The sequence is that of Large ribosomal subunit protein uL18 from Streptomyces griseus subsp. griseus (strain JCM 4626 / CBS 651.72 / NBRC 13350 / KCC S-0626 / ISP 5235).